Here is a 773-residue protein sequence, read N- to C-terminus: Elongin-A (773 aa).

Positions 4-79 (ESALQVVEKL…AQWKKLVPVE (76 aa)) constitute a TFIIS N-terminal domain. Over residues 79 to 93 (ERNNEAEDQDFEKSN) the composition is skewed to basic and acidic residues. The tract at residues 79–480 (ERNNEAEDQD…PRKVPTDVLP (402 aa)) is disordered. Polar residues predominate over residues 112–124 (YQESWQASGSQPY). The span at 136-156 (LPELERPHKVAHGHERRDERK) shows a compositional bias: basic and acidic residues. Residues 162 to 174 (SPPYSSDPESSDY) are compositionally biased toward low complexity. The residue at position 195 (Ser195) is a Phosphoserine. Residues 239-248 (KPHKSSHKEK) show a composition bias toward basic residues. Composition is skewed to basic and acidic residues over residues 249 to 265 (RPVD…MGRE) and 271 to 304 (SSKE…EGNS). Position 310 is a phosphoserine (Ser310). Basic and acidic residues-rich tracts occupy residues 317 to 339 (SDNH…KNKQ) and 368 to 380 (QEGK…DRKS). A phosphoserine mark is found at Ser380 and Ser383. Lys430 carries the post-translational modification N6-acetyllysine. The residue at position 515 (Ser515) is a Phosphoserine. The tract at residues 521-680 (EAGFTGRRMN…PPRDVRRRQE (160 aa)) is activation domain. The BC-box stretch occupies residues 549–558 (TLHQQCIRVL). The F-box domain maps to 565 to 609 (IFEVGGVPYSVLEPVLERCTPDQLYRIEECNHVLIEETDQLWKVH). Residues 671 to 747 (PPRDVRRRQE…VASSSVSYDP (77 aa)) form a disordered region. Positions 704 to 718 (SSHVPASNSSSSFHS) are enriched in low complexity. Positions 728-744 (PSTSSAHLAPVASSSVS) are enriched in polar residues.

In terms of assembly, heterotrimer of an A (ELOA, ELOA2 or ELOA3P), ELOB and ELOC subunit. Part of a multisubunit ubiquitin ligase complex consisting of elongin BC complex (ELOB and ELOC), elongin A/ELOA, RBX1 and CUL5. Interacts with ERCC6; the interaction is induced by DNA damaging agents or inhibitors of RNA polymerase II elongation. Interacts (via BC-box) with CUL5.

It is found in the nucleus. Functionally, SIII, also known as elongin, is a general transcription elongation factor that increases the RNA polymerase II transcription elongation past template-encoded arresting sites. Subunit A is transcriptionally active and its transcription activity is strongly enhanced by binding to the dimeric complex of the SIII regulatory subunits B and C (elongin BC complex). Its function is as follows. As part of a multisubunit complex composed of elongin BC complex (ELOB and ELOC), elongin A/ELOA, RBX1 and CUL5; polyubiquitinates monoubiquitinated POLR2A. This is Elongin-A (Eloa) from Rattus norvegicus (Rat).